The chain runs to 302 residues: Glycine--tRNA ligase alpha subunit (302 aa).

This sequence belongs to the class-II aminoacyl-tRNA synthetase family. In terms of assembly, tetramer of two alpha and two beta subunits.

The protein localises to the cytoplasm. It catalyses the reaction tRNA(Gly) + glycine + ATP = glycyl-tRNA(Gly) + AMP + diphosphate. The protein is Glycine--tRNA ligase alpha subunit of Psychromonas ingrahamii (strain DSM 17664 / CCUG 51855 / 37).